Here is a 318-residue protein sequence, read N- to C-terminus: Thiohydrolase aneE (318 aa).

It belongs to the polyketide transferase af380 family.

It carries out the reaction aculene D + L-prolyl-[peptidyl-carrier protein] = aculene B + holo-[peptidyl-carrier protein]. The enzyme catalyses aculene C + L-prolyl-[peptidyl-carrier protein] = aculene A + holo-[peptidyl-carrier protein]. It functions in the pathway secondary metabolite biosynthesis. Functionally, thiohydrolase; part of the gene cluster that mediates the biosynthesis of aculenes, a unique type of norsesquiterpenes that contain a nordaucane skeleton linked to an L-proline moiety and are of mixed biosynthetic origin. The pathway begins with the synthesis of dauca-4,7-diene by the terpene cyclase aneC using farnesyl pyrophosphate (FPP) as substrate. The cytochrome P450 monooxygenase aneF then performs the initial oxidation at C-12 of dauca-4,7-diene to yield asperaculane D. Asperaculane D is substrate of the cytochrome P450 monooxygenase aneD for C-10 hydroxylation to yield asperaculane E. The cytochrome P450 monooxygenase aneG then converts asperaculane E into aculene D via C-2 oxidation. The monomodular nonribosomal peptide synthtase aneB adenylates L-proline and the thiohydrolase aneE transfers this activated L-proline derivative to aculenes D and C to produce respectively aculenes B and A. The dioxygenase aneA converts aculene D into aculene C, and aculene B into aculene A by introducing the 5,6-alkene moiety. Asperculanes A, B, C and F, as well as 14-prolyl asperculane C, might be shunt products of the pathway. The chain is Thiohydrolase aneE from Aspergillus aculeatus (strain ATCC 16872 / CBS 172.66 / WB 5094).